The primary structure comprises 539 residues: Alpha-copaene synthase (539 aa).

Mg(2+) contacts are provided by Asp290 and Asp294. Residues Asp290, Asp294, and Arg432 each coordinate substrate. The DDXXD motif signature appears at 290–294; sequence DDTFD.

It belongs to the terpene synthase family. In terms of assembly, monomer. Requires Mg(2+) as cofactor. It depends on Mn(2+) as a cofactor.

It localises to the cytoplasm. It catalyses the reaction (2E,6E)-farnesyl diphosphate = alpha-copaene + diphosphate. The enzyme catalyses (2E,6E)-farnesyl diphosphate = (+)-germacrene D + diphosphate. It carries out the reaction (2E,6E)-farnesyl diphosphate = (-)-(E)-beta-caryophyllene + diphosphate. The catalysed reaction is (2E,6E)-farnesyl diphosphate = delta-cadinene + diphosphate. It functions in the pathway secondary metabolite biosynthesis; terpenoid biosynthesis. Converts farnesyl diphosphate to the bicyclic olefins alpha-copaene, (E)-beta-caryophyllene, and to the macrocyclic sesquiterpene germacrene D. Also mediates the biosynthesis of minor sesquiterpene hydrocarbons including delta-cadinene. Involved in indirect defense by producing volatile signals attracting natural enemies of herbivores. This is Alpha-copaene synthase from Zea mays (Maize).